The primary structure comprises 995 residues: Secreted protein CSS1 (995 aa).

Positions 1 to 23 (MFNRLNKFQAALALALYSQSALG) are cleaved as a signal peptide. The 228-residue stretch at 26-253 (YSNSTSISSN…GVSSSGSQSV (228 aa)) folds into the Methyl-accepting transducer domain. 2 N-linked (GlcNAc...) asparagine glycosylation sites follow: N28 and N35. The disordered stretch occupies residues 98–276 (SSSSVSDVSS…TSSASTASGS (179 aa)). 2 N-linked (GlcNAc...) asparagine glycosylation sites follow: N468 and N664.

Belongs to the SRP1/TIP1 family.

The protein resides in the secreted. Functionally, secreted protein that may be involved in cell wall organization and biosynthesis. The polypeptide is Secreted protein CSS1 (Saccharomyces cerevisiae (strain ATCC 204508 / S288c) (Baker's yeast)).